The primary structure comprises 341 residues: tRNA N6-adenosine threonylcarbamoyltransferase (341 aa).

Fe cation contacts are provided by H111 and H115. Residues 134–138 (LVSGG), D167, G180, and N276 each bind substrate. D304 contributes to the Fe cation binding site.

This sequence belongs to the KAE1 / TsaD family. Requires Fe(2+) as cofactor.

The protein localises to the cytoplasm. The enzyme catalyses L-threonylcarbamoyladenylate + adenosine(37) in tRNA = N(6)-L-threonylcarbamoyladenosine(37) in tRNA + AMP + H(+). Required for the formation of a threonylcarbamoyl group on adenosine at position 37 (t(6)A37) in tRNAs that read codons beginning with adenine. Is involved in the transfer of the threonylcarbamoyl moiety of threonylcarbamoyl-AMP (TC-AMP) to the N6 group of A37, together with TsaE and TsaB. TsaD likely plays a direct catalytic role in this reaction. The sequence is that of tRNA N6-adenosine threonylcarbamoyltransferase from Azotobacter vinelandii (strain DJ / ATCC BAA-1303).